Here is a 958-residue protein sequence, read N- to C-terminus: UPF0182 protein TW644 (958 aa).

7 helical membrane-spanning segments follow: residues 14–34 (IAILSVVAFLVLIALTAFFLV), 59–79 (IFVVFCLAFVFVSIFLWLCMF), 107–127 (KIVVLLVSLGLGAVAGIFAAS), 166–186 (LFFLLVTFVLGGILSILISVV), 205–225 (VQYAVLAAGIFVLLGLEFWLN), 249–269 (LIPGFAVLALVALGVALLFCI), and 280–300 (IIGVALAVVSALVVITALPWG).

It belongs to the UPF0182 family.

Its subcellular location is the cell membrane. This chain is UPF0182 protein TW644, found in Tropheryma whipplei (strain TW08/27) (Whipple's bacillus).